The chain runs to 77 residues: Putative defensin-like protein 30 (77 aa).

The signal sequence occupies residues 1 to 26; the sequence is MASSSKCAFLVFLCMIVLLAPSEVHA. 3 cysteine pairs are disulfide-bonded: Cys43–Cys63, Cys49–Cys72, and Cys53–Cys74.

Belongs to the DEFL family.

It localises to the secreted. The protein is Putative defensin-like protein 30 of Arabidopsis thaliana (Mouse-ear cress).